A 95-amino-acid chain; its full sequence is Co-chaperonin GroES (95 aa).

Belongs to the GroES chaperonin family. In terms of assembly, heptamer of 7 subunits arranged in a ring. Interacts with the chaperonin GroEL.

The protein resides in the cytoplasm. Together with the chaperonin GroEL, plays an essential role in assisting protein folding. The GroEL-GroES system forms a nano-cage that allows encapsulation of the non-native substrate proteins and provides a physical environment optimized to promote and accelerate protein folding. GroES binds to the apical surface of the GroEL ring, thereby capping the opening of the GroEL channel. The polypeptide is Co-chaperonin GroES (Pelodictyon phaeoclathratiforme (strain DSM 5477 / BU-1)).